A 473-amino-acid chain; its full sequence is Cyprosin (473 aa).

The propeptide at 1–33 (LKKRKVNILNHPGEHAGSNDANARRKYGVRGNF) is activation peptide. In terms of domain architecture, Peptidase A1 spans 51–470 (YFGEIGIGTP…DYGNLRVGFA (420 aa)). Asp-69 is an active-site residue. 2 disulfide bridges follow: Cys-82-Cys-88 and Cys-247-Cys-251. Asp-256 is an active-site residue. In terms of domain architecture, Saposin B-type spans 281-384 (VMSQQCKSLV…DKLCERLPSP (104 aa)). 4 disulfide bridges follow: Cys-286–Cys-378, Cys-311–Cys-350, Cys-317–Cys-347, and Cys-392–Cys-429. A glycan (N-linked (GlcNAc...) asparagine) is linked at Asn-364.

This sequence belongs to the peptidase A1 family. In terms of tissue distribution, mostly present in the violet parts of styles and corollas of mature flowers.

The protein is Cyprosin (CYPRO1) of Cynara cardunculus (Cardoon).